A 173-amino-acid polypeptide reads, in one-letter code: Inorganic pyrophosphatase (173 aa).

Positions 28, 42, and 54 each coordinate substrate. Residues Asp-64, Asp-69, and Asp-101 each coordinate Mg(2+). Tyr-140 is a binding site for substrate.

Belongs to the PPase family. As to quaternary structure, homohexamer. Mg(2+) serves as cofactor.

It localises to the cytoplasm. It catalyses the reaction diphosphate + H2O = 2 phosphate + H(+). Its function is as follows. Catalyzes the hydrolysis of inorganic pyrophosphate (PPi) forming two phosphate ions. In Helicobacter pylori (strain ATCC 700392 / 26695) (Campylobacter pylori), this protein is Inorganic pyrophosphatase.